We begin with the raw amino-acid sequence, 237 residues long: Lectin alpha chain (237 aa).

Mn(2+)-binding residues include glutamate 8 and aspartate 10. Ca(2+)-binding residues include aspartate 10, tyrosine 12, asparagine 14, and aspartate 19. Tyrosine 12 serves as a coordination point for a carbohydrate. Mn(2+)-binding residues include aspartate 19 and histidine 24. 99 to 100 is an a carbohydrate binding site; that stretch reads LY. Position 208 (aspartate 208) interacts with Ca(2+). A carbohydrate is bound at residue arginine 228.

It belongs to the leguminous lectin family. In terms of assembly, equilibrium between homodimer and homotetramer. Oligomerization is pH-dependent with homotetramers forming at pH 6.5 and above. The beta and gamma chains are produced by partial proteolytic processing of the lectin alpha chain by an asparaginyl endopeptidase. Mixture of 60% alpha lectin and 40% of its beta and gamma proteolytic fragments. As to expression, seed.

The protein resides in the vacuole. The protein localises to the aleurone grain. D-mannose/D-glucose-binding lectin. Has anti-inflammatory activity in rats. Induces histamine release in mast cells from hamster and rat. Induces lymphocyte proliferation and IFNG production. Shows toxicity against the aquatic snail B.glabrata at concentrations higher than 20 ug/ml. This chain is Lectin alpha chain, found in Dioclea virgata.